Here is a 273-residue protein sequence, read N- to C-terminus: Pyrroline-5-carboxylate reductase (273 aa).

This sequence belongs to the pyrroline-5-carboxylate reductase family.

The protein localises to the cytoplasm. The enzyme catalyses L-proline + NADP(+) = (S)-1-pyrroline-5-carboxylate + NADPH + 2 H(+). It carries out the reaction L-proline + NAD(+) = (S)-1-pyrroline-5-carboxylate + NADH + 2 H(+). Its pathway is amino-acid biosynthesis; L-proline biosynthesis; L-proline from L-glutamate 5-semialdehyde: step 1/1. In terms of biological role, catalyzes the reduction of 1-pyrroline-5-carboxylate (PCA) to L-proline. This is Pyrroline-5-carboxylate reductase from Pseudomonas aeruginosa (strain ATCC 15692 / DSM 22644 / CIP 104116 / JCM 14847 / LMG 12228 / 1C / PRS 101 / PAO1).